We begin with the raw amino-acid sequence, 177 residues long: Large ribosomal subunit protein uL6 (177 aa).

The protein belongs to the universal ribosomal protein uL6 family. As to quaternary structure, part of the 50S ribosomal subunit.

This protein binds to the 23S rRNA, and is important in its secondary structure. It is located near the subunit interface in the base of the L7/L12 stalk, and near the tRNA binding site of the peptidyltransferase center. This Bradyrhizobium sp. (strain BTAi1 / ATCC BAA-1182) protein is Large ribosomal subunit protein uL6.